The chain runs to 647 residues: Starch synthase 1, chloroplastic/amyloplastic (647 aa).

The N-terminal 41 residues, 1–41 (MAATGVGAGCLAPSVRLRADPATAARASACVVRARLRRVAR), are a transit peptide targeting the chloroplast. Residues 66–91 (PLVPGFLAPPPPAPAQSPAPTQPPLP) are compositionally biased toward pro residues. The interval 66–95 (PLVPGFLAPPPPAPAQSPAPTQPPLPDAGV) is disordered. K153 contacts ADP-alpha-D-glucose.

Belongs to the glycosyltransferase 1 family. Bacterial/plant glycogen synthase subfamily.

It localises to the plastid. The protein localises to the chloroplast. The protein resides in the amyloplast. The catalysed reaction is [(1-&gt;4)-alpha-D-glucosyl](n) + ADP-alpha-D-glucose = [(1-&gt;4)-alpha-D-glucosyl](n+1) + ADP + H(+). The protein operates within glycan biosynthesis; starch biosynthesis. In Triticum aestivum (Wheat), this protein is Starch synthase 1, chloroplastic/amyloplastic (WSSI-2).